Here is a 1070-residue protein sequence, read N- to C-terminus: Phosphatidylinositol 4,5-bisphosphate 3-kinase catalytic subunit beta isoform (1070 aa).

Positions 26-115 (SDGSISVDFL…LPVLKLVTRS (90 aa)) constitute a PI3K-ABD domain. One can recognise a PI3K-RBD domain in the interval 194–285 (GGKLVVAVHF…RTLPHFILVE (92 aa)). A Phosphoserine modification is found at Ser324. One can recognise a C2 PI3K-type domain in the interval 327-496 (WGNNNPFQIV…NATALHIKFP (170 aa)). A Nuclear localization signal (NLS) motif is present at residues 410-418 (KVKTKKSTK). In terms of domain architecture, PIK helical spans 524 to 701 (ANVSSRGGKK…GVILEAYCRG (178 aa)). Residues 772–1053 (YVEKCRYMDS…KFDEALRESW (282 aa)) enclose the PI3K/PI4K catalytic domain. Positions 778 to 784 (YMDSKMK) are G-loop. Residues 916–924 (GIGDRHSDN) are catalytic loop. The interval 935–961 (HIDFGHILGNFKSKFGIKRERVPFILT) is activation loop. Ser1070 carries the phosphoserine; by autocatalysis modification.

Belongs to the PI3/PI4-kinase family. Heterodimer of a catalytic subunit PIK3CB and a p85 regulatory subunit (PIK3R1, PIK3R2 or PIK3R3). Interaction with PIK3R2 is required for nuclear localization and nuclear export. Part of a complex with PIK3R1 and PTEN. Binding to PTEN may antagonize the lipid kinase activity under normal growth conditions. Part of a complex involved in autophagosome formation composed of PIK3C3 and PIK3R4. Interacts with BECN1, ATG14 and RAB5A. Autophosphorylation at Ser-1070 negatively regulates the phosphatidylinositol-4,5-bisphosphate 3-kinase activity.

It localises to the cytoplasm. The protein resides in the nucleus. It carries out the reaction a 1,2-diacyl-sn-glycero-3-phospho-(1D-myo-inositol-4,5-bisphosphate) + ATP = a 1,2-diacyl-sn-glycero-3-phospho-(1D-myo-inositol-3,4,5-trisphosphate) + ADP + H(+). The catalysed reaction is 1-octadecanoyl-2-(5Z,8Z,11Z,14Z)-eicosatetraenoyl-sn-glycero-3-phospho-1D-myo-inositol 4,5-bisphosphate + ATP = 1-octadecanoyl-2-(5Z,8Z,11Z,14Z-eicosatetraenoyl)-sn-glycero-3-phospho-(1D-myo-inositol 3,4,5-triphosphate) + ADP + H(+). It catalyses the reaction L-seryl-[protein] + ATP = O-phospho-L-seryl-[protein] + ADP + H(+). It functions in the pathway phospholipid metabolism; phosphatidylinositol phosphate biosynthesis. Phosphoinositide-3-kinase (PI3K) phosphorylates phosphatidylinositol (PI) derivatives at position 3 of the inositol ring to produce 3-phosphoinositides. Uses ATP and PtdIns(4,5)P2 (phosphatidylinositol 4,5-bisphosphate) to generate phosphatidylinositol 3,4,5-trisphosphate (PIP3). PIP3 plays a key role by recruiting PH domain-containing proteins to the membrane, including AKT1 and PDPK1, activating signaling cascades involved in cell growth, survival, proliferation, motility and morphology. Involved in the activation of AKT1 upon stimulation by G-protein coupled receptors (GPCRs) ligands such as CXCL12, sphingosine 1-phosphate, and lysophosphatidic acid. May also act downstream receptor tyrosine kinases. Required in different signaling pathways for stable platelet adhesion and aggregation. Plays a role in platelet activation signaling triggered by GPCRs, alpha-IIb/beta-3 integrins (ITGA2B/ ITGB3) and ITAM (immunoreceptor tyrosine-based activation motif)-bearing receptors such as GP6. Regulates the strength of adhesion of ITGA2B/ ITGB3 activated receptors necessary for the cellular transmission of contractile forces. Required for platelet aggregation induced by F2 (thrombin) and thromboxane A2 (TXA2). Has a role in cell survival. May have a role in cell migration. Involved in the early stage of autophagosome formation. Modulates the intracellular level of PtdIns3P (phosphatidylinositol 3-phosphate) and activates PIK3C3 kinase activity. May act as a scaffold, independently of its lipid kinase activity to positively regulate autophagy. May have a role in insulin signaling as scaffolding protein in which the lipid kinase activity is not required. May have a kinase-independent function in regulating cell proliferation and in clathrin-mediated endocytosis. Mediator of oncogenic signal in cell lines lacking PTEN. The lipid kinase activity is necessary for its role in oncogenic transformation. Required for the growth of ERBB2 and RAS driven tumors. Also has a protein kinase activity showing autophosphorylation. This chain is Phosphatidylinositol 4,5-bisphosphate 3-kinase catalytic subunit beta isoform (Pik3cb), found in Rattus norvegicus (Rat).